The sequence spans 386 residues: Protein salvador homolog 1 (386 aa).

Serine 95 and serine 137 each carry phosphoserine. WW domains follow at residues 200–233 (LPLPPGWSVDWTMRGRKYYIDHNTNTTHWSHPLE) and 235–268 (EGLPPGWERVESSEFGTYYVDHTNKRAQYRHPCA). Threonine 211 is subject to Phosphothreonine. One can recognise an SARAH domain in the interval 322–369 (ILKWELFQLADLDTYQGMLKLLFMKELEQIVKLYEAYRQALLTELENR). Residues 345-374 (MKELEQIVKLYEAYRQALLTELENRKQRQQ) are a coiled coil.

In terms of assembly, homodimer. Stabilized through interaction with STK3/MST2 or STK4/MST1. Interacts (via SARAH domain) with isoform 1 of NEK2. Interacts with ESR1 only in the presence of STK3/MST2. Interacts with WTIP and AJUBA. Post-translationally, phosphorylated by STK3/MST2 and STK4/MST1. Phosphorylation is not required for SAV1 stability and may increase the number of protein binding sites on the scaffold molecule. Ubiquitously expressed in adult tissues with the highest level found in testis.

The protein resides in the nucleus. It localises to the cytoplasm. Functionally, regulator of STK3/MST2 and STK4/MST1 in the Hippo signaling pathway which plays a pivotal role in organ size control and tumor suppression by restricting proliferation and promoting apoptosis. The core of this pathway is composed of a kinase cascade wherein STK3/MST2 and STK4/MST1, in complex with its regulatory protein SAV1, phosphorylates and activates LATS1/2 in complex with its regulatory protein MOB1, which in turn phosphorylates and inactivates YAP1 oncoprotein and WWTR1/TAZ. Phosphorylation of YAP1 by LATS1/2 inhibits its translocation into the nucleus to regulate cellular genes important for cell proliferation, cell death, and cell migration. SAV1 is required for STK3/MST2 and STK4/MST1 activation and promotes cell-cycle exit and terminal differentiation in developing epithelial tissues. Plays a role in centrosome disjunction by regulating the localization of NEK2 to centrosomes, and its ability to phosphorylate CROCC and CEP250. In conjunction with STK3/MST2, activates the transcriptional activity of ESR1 through the modulation of its phosphorylation. In Mus musculus (Mouse), this protein is Protein salvador homolog 1 (Sav1).